A 234-amino-acid chain; its full sequence is Phosphoribosylformylglycinamidine synthase subunit PurQ (234 aa).

One can recognise a Glutamine amidotransferase type-1 domain in the interval 6-234 (VGVVVFPGSN…ESLFRSLTGV (229 aa)). Cysteine 89 (nucleophile) is an active-site residue. Residues histidine 206 and glutamate 208 contribute to the active site.

Part of the FGAM synthase complex composed of 1 PurL, 1 PurQ and 2 PurS subunits.

The protein localises to the cytoplasm. It catalyses the reaction N(2)-formyl-N(1)-(5-phospho-beta-D-ribosyl)glycinamide + L-glutamine + ATP + H2O = 2-formamido-N(1)-(5-O-phospho-beta-D-ribosyl)acetamidine + L-glutamate + ADP + phosphate + H(+). The catalysed reaction is L-glutamine + H2O = L-glutamate + NH4(+). The protein operates within purine metabolism; IMP biosynthesis via de novo pathway; 5-amino-1-(5-phospho-D-ribosyl)imidazole from N(2)-formyl-N(1)-(5-phospho-D-ribosyl)glycinamide: step 1/2. Part of the phosphoribosylformylglycinamidine synthase complex involved in the purines biosynthetic pathway. Catalyzes the ATP-dependent conversion of formylglycinamide ribonucleotide (FGAR) and glutamine to yield formylglycinamidine ribonucleotide (FGAM) and glutamate. The FGAM synthase complex is composed of three subunits. PurQ produces an ammonia molecule by converting glutamine to glutamate. PurL transfers the ammonia molecule to FGAR to form FGAM in an ATP-dependent manner. PurS interacts with PurQ and PurL and is thought to assist in the transfer of the ammonia molecule from PurQ to PurL. This chain is Phosphoribosylformylglycinamidine synthase subunit PurQ, found in Chlorobium chlorochromatii (strain CaD3).